The sequence spans 134 residues: Large ribosomal subunit protein uL16c (134 aa).

The protein belongs to the universal ribosomal protein uL16 family. As to quaternary structure, part of the 50S ribosomal subunit.

The protein resides in the plastid. Its subcellular location is the chloroplast. This chain is Large ribosomal subunit protein uL16c, found in Pinus thunbergii (Japanese black pine).